The sequence spans 185 residues: MSTFEDADTEETVTCLQMTIYHPGQLQSGIFKSIRFCSKEKFPSIEVVKFGRNSNMCQYTFQDKQVSRVQFALQPFKQFNSSVLSFEIKNMSKKTSLMVDNQELGYLNKMDLPYKCMLRFGEYQFLLQKEDGESVESFETQFILSPRPLLQENNWPTQSPIPEDGVYSSYFTHRSSPAEMDENEL.

Thr-9 bears the Phosphothreonine mark. An FHA domain is found at 48–104 (VKFGRNSNMCQYTFQDKQVSRVQFALQPFKQFNSSVLSFEIKNMSKKTSLMVDNQEL).

Belongs to the TIFA family. In terms of assembly, homooligomer; homooligomerizes following phosphorylation at Thr-9. Interacts with IRAK1, TRAF2 and TRAF6. Interacts with TIFAB; binding to TIFAB inhibits TRAF6 activation, possibly by inducing a conformational change in TIFA. Interacts with ZCCHC11; binding to ZCCHC11 suppresses the TRAF6-dependent activation of NF-kappa-B. Phosphorylated at Thr-9 following detection of ADP-D-glycero-beta-D-manno-heptose (ADP-Heptose) by ALPK1. Phosphorylation at Thr-9 by ALPK1 leads to the formation of an intermolecular binding between the FHA domain and phosphorylated Thr-9, promoting TIFA oligomerization and TIFA-mediated NF-kappa-B activation.

The protein resides in the cytoplasm. In terms of biological role, adapter molecule that plays a key role in the activation of pro-inflammatory NF-kappa-B signaling following detection of bacterial pathogen-associated molecular pattern metabolites (PAMPs). Promotes activation of an innate immune response by inducing the oligomerization and polyubiquitination of TRAF6, which leads to the activation of TAK1 and IKK through a proteasome-independent mechanism. TIFA-dependent innate immune response is triggered by ADP-D-glycero-beta-D-manno-heptose (ADP-Heptose), a potent PAMP present in all Gram-negative and some Gram-positive bacteria: ADP-Heptose is recognized by ALPK1, which phosphorylates TIFA at Thr-9, leading to TIFA homooligomerization and subsequent activation of pro-inflammatory NF-kappa-B signaling. The sequence is that of TRAF-interacting protein with FHA domain-containing protein A from Rattus norvegicus (Rat).